Here is a 402-residue protein sequence, read N- to C-terminus: MSVAFASARPRGKGEVTQQTIQKMLDENHHLIQCILDYQSKGKTAECTQYQQILHRNLVYLATIADSNQNMQSLLPAPPTQSMTLGPGGLSQSGSAQGLHSQGSLSDAIGAGLPPSSLMQAQIGNGPNHVSLQQTAQSTLPTTSMSMSGSGHGSGPGYSHSGPASQSVPLQSQGAISNYVSRANINMQSNPVSMMHQQAASSHYSAAQGGSQHYQGQSMAMMGQSGQGGGVMGQRPMAPYRPSQQGSSQQYLGQEEYYGGEQYGHGQAASEPMSQQYYPDGHGDYAYQPASYTDQSYDRSFEDSTQHYYEGGNSQYSQQQTGYQQGTAQQQTYSQQQYPNQQSYPGQQQGYGPAQGAPSQYSSYQQGQGQQYGSYRASQTGPSTQQQRPYGYEQGQYGNYQQ.

Residues 1-148 are N-terminal auto-inhibitory domain; necessary for interaction with SMARCA4/BRG1; it reads MSVAFASARP…TLPTTSMSMS (148 aa). The SH2-binding signature appears at 50 to 53; that stretch reads YQQI. Disordered regions lie at residues 72–129, 141–170, 195–250, 262–290, and 305–402; these read QSLL…GPNH, PTTS…SVPL, MHQQ…SSQQ, QYGH…YQPA, and TQHY…NYQQ. Low complexity predominate over residues 92–106; the sequence is QSGSAQGLHSQGSLS. Residues 117 to 129 are compositionally biased toward polar residues; the sequence is SLMQAQIGNGPNH. The tract at residues 149–237 is methionine-rich intra-molecular domain; sequence GSGHGSGPGY…GGGVMGQRPM (89 aa). Low complexity predominate over residues 196–224; sequence HQQAASSHYSAAQGGSQHYQGQSMAMMGQ. Positions 251–323 are MFD domain; that stretch reads YLGQEEYYGG…SQYSQQQTGY (73 aa). Composition is skewed to low complexity over residues 311 to 379 and 390 to 402; these read GGNS…RASQ and YGYE…NYQQ. The necessary for nuclear localization stretch occupies residues 340-402; sequence NQQSYPGQQQ…EQGQYGNYQQ (63 aa). The short motif at 359 to 362 is the SH2-binding element; it reads SQYS. An SH3-binding motif is present at residues 377–385; that stretch reads ASQTGPSTQ. The segment at 393–402 is necessary for interaction with CREBBP and for the recruitment of CREBBP to the nuclear bodies; it reads EQGQYGNYQQ. Positions 397–400 match the SH2-binding motif; sequence YGNY.

It belongs to the SS18 family. Homodimer. Dimerization may be necessary for its function in neuronal dendritic development. Interacts (via C-terminus) with CREBBP (via N-terminus), EP300 and SMARCA4/BRG1. Interacts with the nBAF complex. Association with CREBBP facilitates transcription while the association with SMARCA4/BRG1 suppresses CREST-mediated transcription in resting neurons.

It is found in the nucleus. The protein resides in the chromosome. Its subcellular location is the centromere. It localises to the kinetochore. Transcriptional activator which is required for calcium-dependent dendritic growth and branching in cortical neurons. Recruits CREB-binding protein (CREBBP) to nuclear bodies. Component of the CREST-BRG1 complex, a multiprotein complex that regulates promoter activation by orchestrating a calcium-dependent release of a repressor complex and a recruitment of an activator complex. In resting neurons, transcription of the c-FOS promoter is inhibited by BRG1-dependent recruitment of a phospho-RB1-HDAC1 repressor complex. Upon calcium influx, RB1 is dephosphorylated by calcineurin, which leads to release of the repressor complex. At the same time, there is increased recruitment of CREBBP to the promoter by a CREST-dependent mechanism, which leads to transcriptional activation. The CREST-BRG1 complex also binds to the NR2B promoter, and activity-dependent induction of NR2B expression involves a release of HDAC1 and recruitment of CREBBP. In Bos taurus (Bovine), this protein is Calcium-responsive transactivator (SS18L1).